A 424-amino-acid polypeptide reads, in one-letter code: Keratin, type I cytoskeletal 20 (424 aa).

Residues 1-69 (MDFSRRSFHR…TGGGDLFVGN (69 aa)) form a head region. The residue at position 13 (Ser-13) is a Phosphoserine; by MAPKAPK2, MAPKAPK3 and PKC. The tract at residues 70–105 (EKMAMQNLNDRLASYLEKVRTLEQSNSKLEVQIKQW) is coil 1A. The IF rod domain occupies 70-381 (EKMAMQNLND…RLLEGEDVKT (312 aa)). Positions 106 to 123 (YETNAPRAGRDYSAYYRQ) are linker 1. The tract at residues 124-215 (IEELRSQIKD…KEHQEEVDGL (92 aa)) is coil 1B. The tract at residues 216–238 (HKHLGNTVNVEVDAAPGLNLGVI) is linker 12. The segment at 239 to 377 (MNEMRQKYEV…ATYRRLLEGE (139 aa)) is coil 2. The segment at 378–424 (DVKTTEYQLSTLEERDIKKTRKIKTVVQEVVDGKVVSSEVKEVEENI) is tail.

Belongs to the intermediate filament family. Heterotetramer of two type I and two type II keratins. Associates with KRT8. In terms of processing, hyperphosphorylation at Ser-13 occurs during the early stages of apoptosis but becomes less prominent during the later stages. Phosphorylation at Ser-13 also increases in response to stress brought on by cell injury. Post-translationally, proteolytically cleaved by caspases during apoptosis. Cleavage occurs at Asp-228. Expressed predominantly in the intestinal epithelium. Expressed in luminal cells of colonic mucosa. Also expressed in the Merkel cells of keratinized oral mucosa; specifically at the tips of some rete ridges of the gingival mucosa, in the basal layer of the palatal mucosa and in the taste buds of lingual mucosa.

The protein localises to the cytoplasm. Its function is as follows. Plays a significant role in maintaining keratin filament organization in intestinal epithelia. When phosphorylated, plays a role in the secretion of mucin in the small intestine. In Homo sapiens (Human), this protein is Keratin, type I cytoskeletal 20 (KRT20).